The chain runs to 393 residues: Dual-specificity RNA methyltransferase RlmN (393 aa).

The interval 1–22 (MSEQLLSELSPVAATSPSPAPA) is disordered. Residues 10–22 (SPVAATSPSPAPA) show a composition bias toward low complexity. The Proton acceptor role is filled by Glu-114. In terms of domain architecture, Radical SAM core spans 120 to 358 (EDDRATLCVS…TTIVRKTRGD (239 aa)). Cys-127 and Cys-364 are joined by a disulfide. Residues Cys-134, Cys-138, and Cys-141 each contribute to the [4Fe-4S] cluster site. Residues 188-189 (GE), Ser-220, 242-244 (SLH), and Asn-321 contribute to the S-adenosyl-L-methionine site. The active-site S-methylcysteine intermediate is Cys-364.

It belongs to the radical SAM superfamily. RlmN family. The cofactor is [4Fe-4S] cluster.

Its subcellular location is the cytoplasm. The enzyme catalyses adenosine(2503) in 23S rRNA + 2 reduced [2Fe-2S]-[ferredoxin] + 2 S-adenosyl-L-methionine = 2-methyladenosine(2503) in 23S rRNA + 5'-deoxyadenosine + L-methionine + 2 oxidized [2Fe-2S]-[ferredoxin] + S-adenosyl-L-homocysteine. It catalyses the reaction adenosine(37) in tRNA + 2 reduced [2Fe-2S]-[ferredoxin] + 2 S-adenosyl-L-methionine = 2-methyladenosine(37) in tRNA + 5'-deoxyadenosine + L-methionine + 2 oxidized [2Fe-2S]-[ferredoxin] + S-adenosyl-L-homocysteine. In terms of biological role, specifically methylates position 2 of adenine 2503 in 23S rRNA and position 2 of adenine 37 in tRNAs. m2A2503 modification seems to play a crucial role in the proofreading step occurring at the peptidyl transferase center and thus would serve to optimize ribosomal fidelity. This Sodalis glossinidius (strain morsitans) protein is Dual-specificity RNA methyltransferase RlmN.